The chain runs to 580 residues: NADH-quinone oxidoreductase subunit C/D (580 aa).

The segment at 1–171 (MSFDQVIADA…PPFVLTDRLF (171 aa)) is NADH dehydrogenase I subunit C. The tract at residues 195–580 (ELMVLNFGPH…IDFVMSDVDR (386 aa)) is NADH dehydrogenase I subunit D.

The protein in the N-terminal section; belongs to the complex I 30 kDa subunit family. This sequence in the C-terminal section; belongs to the complex I 49 kDa subunit family. NDH-1 is composed of 13 different subunits. Subunits NuoB, CD, E, F, and G constitute the peripheral sector of the complex.

It is found in the cell inner membrane. The enzyme catalyses a quinone + NADH + 5 H(+)(in) = a quinol + NAD(+) + 4 H(+)(out). In terms of biological role, NDH-1 shuttles electrons from NADH, via FMN and iron-sulfur (Fe-S) centers, to quinones in the respiratory chain. The immediate electron acceptor for the enzyme in this species is believed to be ubiquinone. Couples the redox reaction to proton translocation (for every two electrons transferred, four hydrogen ions are translocated across the cytoplasmic membrane), and thus conserves the redox energy in a proton gradient. This is NADH-quinone oxidoreductase subunit C/D from Cereibacter sphaeroides (strain ATCC 17025 / ATH 2.4.3) (Rhodobacter sphaeroides).